The primary structure comprises 83 residues: Colicin-E5 immunity protein in ColE9 (83 aa).

In Escherichia coli, this protein is Colicin-E5 immunity protein in ColE9.